The primary structure comprises 378 residues: Phosphoglycerate kinase (378 aa).

(2R)-3-phosphoglycerate is bound by residues V1, D2, F3, N4, N16, R17, S40, H41, G43, R44, L99, R100, H147, and R148. G191 is an ADP binding site. Position 191 (G191) interacts with CDP. The AMP site is built by A192 and K193. An ATP-binding site is contributed by A192. A192 is a Mg(2+) binding site. D196 contributes to the CDP binding site. D196 serves as a coordination point for Mg(2+). K197 contributes to the AMP binding site. K197 provides a ligand contact to ATP. G215 provides a ligand contact to ADP. Residue G215 participates in CDP binding. G216 and G288 together coordinate AMP. Positions 216 and 288 each coordinate ATP. CDP is bound by residues G313 and F318. F318 is a binding site for ADP. E319 provides a ligand contact to AMP. ATP-binding residues include E319, D351, and T352. D351 contacts Mg(2+).

This sequence belongs to the phosphoglycerate kinase family. As to quaternary structure, monomer. Requires Mg(2+) as cofactor.

The catalysed reaction is (2R)-3-phosphoglycerate + ATP = (2R)-3-phospho-glyceroyl phosphate + ADP. It participates in carbohydrate degradation; glycolysis; pyruvate from D-glyceraldehyde 3-phosphate: step 2/5. The polypeptide is Phosphoglycerate kinase (PGK) (Condylostoma magnum).